The primary structure comprises 188 residues: Ribosome maturation factor RimP (188 aa).

The protein belongs to the RimP family.

The protein resides in the cytoplasm. Required for maturation of 30S ribosomal subunits. The polypeptide is Ribosome maturation factor RimP (Erythrobacter litoralis (strain HTCC2594)).